Consider the following 212-residue polypeptide: uncharacterized protein (212 aa).

The next 2 helical transmembrane spans lie at 54–74 (LCFA…GYAG) and 79–99 (WIIC…ALLL).

The protein resides in the cell membrane. This is an uncharacterized protein from Chlamydia pneumoniae (Chlamydophila pneumoniae).